Here is a 160-residue protein sequence, read N- to C-terminus: Transmembrane protein 216 (160 aa).

Transmembrane regions (helical) follow at residues 41–61 (WYFA…GVIL), 68–88 (LILD…RLFY), 101–121 (LFVS…YLLL), and 134–154 (AVLL…ISIF).

As to quaternary structure, part of the tectonic-like complex (also named B9 complex).

It is found in the membrane. It localises to the cytoplasm. Its subcellular location is the cytoskeleton. The protein localises to the cilium basal body. Part of the tectonic-like complex which is required for tissue-specific ciliogenesis and may regulate ciliary membrane composition. This is Transmembrane protein 216 (tmem216) from Danio rerio (Zebrafish).